The chain runs to 591 residues: MADRGQRRGCAPGIASALRASFQGKSRPWTQTRYWAFALLTPLVVAMVLTGCSASGTQLELAPTADRRAAVGTTSDINQQDPATLQDGGNLRLSLTDFPPNFNILHIDGNNAEVAAMMKATLPRAFIIGPDGSTTVDTNYFTSIELTRTAPQVVTYTINPEAVWSDGTPITWRDIASQIHAISGADKAFEIASSSGAERVASVTRGVDDRQAVVTFAKPYAEWRGMFAGNGMLLPASMTATPEAFNKGQLDGPGPSAGPFVVSALDRTAQRIVLTRNPRWWGARPRLDSITYLVLDDAARLPALQNNTIDATGVGTLDQLTIAARTKGISIRRAPGPSWYHFTLNGAPGSILADKALRLAIAKGIDRYTIARVAQYGLTSDPVPLNNHVFVAGQDGYQDNSGVVAYNPEQAKRELDALGWRRSGAFREKDGRQLVIRDLFYDAQSTRQFAQIAQHTLAQIGVKLELQAKSGSGFFSDYVNVGAFDIAQFGWVGDAFPLSSLTQIYASDGESNFGKIGSPQIDAAIERTLAELDPGKARALANQVDELIWAEGFSLPLTQSPGTVAVRSTLANFGATGLADLDYTAIGFMRR.

This sequence belongs to the bacterial solute-binding protein 5 family. As to quaternary structure, the complex is composed of an ATP-binding protein (OppD), two transmembrane proteins (OppB and OppC) and a solute-binding protein (OppA).

It is found in the periplasm. Its function is as follows. Part of the ABC transporter complex OppABCD involved in the uptake of oligopeptides. Peptide-binding protein that shows broad specificity but a moderate preference for hydrophobic oligopeptides and those that are 6-16 amino acids long. The sequence is that of Oligopeptide-binding protein OppA from Mycobacterium bovis (strain ATCC BAA-935 / AF2122/97).